We begin with the raw amino-acid sequence, 876 residues long: MAATDTPWRPFRQAGALRRPMIDPAFVQGHPAYPDAFAQFFAGHGRYGHFAERVGNRNSRNGWRRRALAPGPAVGAEIVARHHEAAAQAGQGGDAARHQHRVDRLGQHHVRAAFEQVGRHFRLRGRSEHDRHRKGIVGADSPAHPPHQIARLLHAEIRVHHQKVDHFRPEVVFGIVAVVKAQQIPASQHAKGAGDDITAAEVEIAQQGAHTWGVVGHGLPSWQERTTFWPPAFRSPSDRSATSEFVAGLVNIGLSRLDKIWPGMPSSRFGFKRAYEGFMHVYRSHTCGQLKAADAGIQARLSGWVHRKRDHGNLLFVDLRDHYGITQCVIDVSSPVFAALDKARPESVITVTGKVVKRSAETINPRLPTGEIELQVAEVEIQSIADVLPIQVAGDQEYPEDMRLRYRFLDLRREDVHANMMLRSRVIAYLRQAMIGQGFTEFQTPILTASSPEGARDYLVPSRIHPGKFYALPQAPQQFKQLLMVAGFDKYFQIAPCFRDEAGRADRSPGEFYQLDFEMSYVTQDDVFAAIEPVLEGVFKEFGKGRAVTPAPFPRITYADSMLKYGSDKPDLRNPIIIADVTEPFRGSGFGLFAKLVDKGAVVRAIPAPGAAGQPRSWFDKLNDWARENGAGGLGYIQFAADGPKGPIAKNLEPARVEAIKAAANLKDGDAVFFACDKALPAAKFAGLVRTKIGNELDLLEKDVFKFCWTVDFPMYEINEETGLVEFSHNPFSMPQGGMDALLNQDPLTINAYQYDIVCNGVELSSGAIRNHRPDIMYKAFEIAGYSAAHVEEHFGGMLNAFKFGAPPHGGSAPGVDRIVMLLADQPNIREIILFPMNQQAQDLLMQAPAEIAMERLRELHIKVDLPKPKKEVKEG.

The segment at 1–278 (MAATDTPWRP…FGFKRAYEGF (278 aa)) is unknown. An aspartyl-tRNA synthetase region spans residues 279–876 (MHVYRSHTCG…PKPKKEVKEG (598 aa)). E453 serves as a coordination point for L-aspartate. Positions 477-480 (QQFK) are aspartate. R499 and H729 together coordinate L-aspartate. Residue 499–501 (RDE) coordinates ATP. Position 763 (E763) interacts with ATP. R770 contacts L-aspartate. 815 to 818 (GVDR) provides a ligand contact to ATP.

Belongs to the class-II aminoacyl-tRNA synthetase family. Type 1 subfamily. As to quaternary structure, homodimer.

Its subcellular location is the cytoplasm. It catalyses the reaction tRNA(Asx) + L-aspartate + ATP = L-aspartyl-tRNA(Asx) + AMP + diphosphate. In terms of biological role, aspartyl-tRNA synthetase with relaxed tRNA specificity since it is able to aspartylate not only its cognate tRNA(Asp) but also tRNA(Asn). Reaction proceeds in two steps: L-aspartate is first activated by ATP to form Asp-AMP and then transferred to the acceptor end of tRNA(Asp/Asn). This is Aspartate--tRNA(Asp/Asn) ligase (aspS) from Paramagnetospirillum magneticum (strain ATCC 700264 / AMB-1) (Magnetospirillum magneticum).